Consider the following 443-residue polypeptide: Xaa-Pro dipeptidase (443 aa).

The Mn(2+) site is built by Asp-246, Asp-257, His-339, Glu-384, and Glu-423.

Belongs to the peptidase M24B family. Bacterial-type prolidase subfamily. Requires Mn(2+) as cofactor.

It catalyses the reaction Xaa-L-Pro dipeptide + H2O = an L-alpha-amino acid + L-proline. Its function is as follows. Splits dipeptides with a prolyl residue in the C-terminal position. In Pectobacterium carotovorum subsp. carotovorum (strain PC1), this protein is Xaa-Pro dipeptidase.